We begin with the raw amino-acid sequence, 105 residues long: UPF0235 protein RrIowa_1526 (105 aa).

It belongs to the UPF0235 family.

The polypeptide is UPF0235 protein RrIowa_1526 (Rickettsia rickettsii (strain Iowa)).